The chain runs to 691 residues: Threonine--tRNA ligase (691 aa).

Residues 1–22 (MSVPAQPAPGADGGDPRQPIRV) form a disordered region. The region spanning 1 to 73 (MSVPAQPAPG…DADAEVTPIA (73 aa)) is the TGS domain. The interval 268–574 (DHRKLGVELD…LTEHYAGAFP (307 aa)) is catalytic. Zn(2+)-binding residues include cysteine 373, histidine 424, and histidine 551.

The protein belongs to the class-II aminoacyl-tRNA synthetase family. Homodimer. It depends on Zn(2+) as a cofactor.

The protein localises to the cytoplasm. The catalysed reaction is tRNA(Thr) + L-threonine + ATP = L-threonyl-tRNA(Thr) + AMP + diphosphate + H(+). In terms of biological role, catalyzes the attachment of threonine to tRNA(Thr) in a two-step reaction: L-threonine is first activated by ATP to form Thr-AMP and then transferred to the acceptor end of tRNA(Thr). Also edits incorrectly charged L-seryl-tRNA(Thr). The sequence is that of Threonine--tRNA ligase from Mycobacterium marinum (strain ATCC BAA-535 / M).